We begin with the raw amino-acid sequence, 366 residues long: Lysophosphatidic acid receptor 1-A (366 aa).

Topologically, residues 1-52 (MASLSEFVSEPISMMSQTSAASESQCYYNETIAFFYNRSGKYLATEWNAVSK) are extracellular. Cystine bridges form between Cys-26–Cys-192 and Cys-190–Cys-197. N-linked (GlcNAc...) asparagine glycans are attached at residues Asn-29 and Asn-37. Lys-41 contributes to the a 1-acyl-sn-glycero-3-phosphate binding site. The chain crosses the membrane as a helical span at residues 53–77 (LVMGLGITVCIFIMLANLLVMVAIY). Topologically, residues 78–85 (VNRRFHFP) are cytoplasmic. The chain crosses the membrane as a helical span at residues 86–109 (IYYLMANLAAADFFAGLAYFYLMF). Residues 110–123 (NTGPNTRRLTVSTW) lie on the Extracellular side of the membrane. A helical membrane pass occupies residues 124–146 (LLRQGLIDTSLTASVANLLAIAI). Position 126–131 (126–131 (RQGLID)) interacts with a 1-acyl-sn-glycero-3-phosphate. The Cytoplasmic segment spans residues 147 to 165 (ERHITVFRMQLHTRMSNRR). A helical transmembrane segment spans residues 166 to 186 (VVVVIVVIWTVAIVMGAIPSV). Topologically, residues 187-206 (GWNCICDLEQCSNMAPLYSD) are extracellular. The helical transmembrane segment at 207 to 227 (SYLIFWTIFNLVTFVVMVVLY) threads the bilayer. Trp-212 contacts a 1-acyl-sn-glycero-3-phosphate. Residues 228-257 (AHIFVYVRQKTMRMSRHSSGPRRNRDTMMS) lie on the Cytoplasmic side of the membrane. A helical transmembrane segment spans residues 258-282 (LLKTVVIVLGAFIVCWTPGLVLLLL). At 283-296 (DICCPQCNILAYEK) the chain is on the extracellular side. Cys-286 and Cys-289 form a disulfide bridge. Residues 297–317 (FFLLLAEFNSAMNPIIYSYRD) traverse the membrane as a helical segment. At 318–366 (KEMSATFKQILCCQRTENVNGPTEGSDRSASSLNHTILAGVHSNDHSVV) the chain is on the cytoplasmic side.

Belongs to the G-protein coupled receptor 1 family. Expressed at high levels in oocytes and at lower levels in brain and spinal cord. Below detection level in lung, heart, kidney, liver, muscle, stomach, and intestine.

The protein localises to the cell surface. The protein resides in the cell membrane. It localises to the endosome. Receptor for lysophosphatidic acid (LPA). Plays a role in the reorganization of the actin cytoskeleton, cell migration, differentiation and proliferation, and thereby contributes to the responses to tissue damage and infectious agents. Activates downstream signaling cascades via the G(i)/G(o), G(12)/G(13), and G(q) families of heteromeric G proteins. Signaling inhibits adenylyl cyclase activity and decreases cellular cAMP levels. Signaling triggers an increase of cytoplasmic Ca(2+) levels. Signaling leads to the activation of phospholipase C (PLC) and the formation of inositol 1,4,5-trisphosphate. Signaling mediates activation of down-stream MAP kinases. Contributes to the regulation of cell shape. Promotes Rho-dependent reorganization of the actin cytoskeleton in neuronal cells and neurite retraction. Promotes the activation of Rho and the formation of actin stress fibers. Promotes formation of lamellipodia at the leading edge of migrating cells via activation of Rac. Through its function as lysophosphatidic acid receptor, plays a role in chemotaxis and cell migration, including responses to injury and wounding. Promotes cell proliferation in response to lysophosphatidic acid. In Xenopus laevis (African clawed frog), this protein is Lysophosphatidic acid receptor 1-A (lpar1-a).